The following is a 220-amino-acid chain: Putative glutathione S-transferase C460.02c (220 aa).

The GST N-terminal domain maps to 1-81 (MFLGTIYSFK…YFYEKGKHND (81 aa)). The region spanning 89–216 (NEIEEAEMLK…YPLELPLTVT (128 aa)) is the GST C-terminal domain.

Belongs to the GST superfamily.

The protein localises to the cytoplasm. The enzyme catalyses RX + glutathione = an S-substituted glutathione + a halide anion + H(+). Involved in the oxidative stress response and detoxification. The polypeptide is Putative glutathione S-transferase C460.02c (Schizosaccharomyces pombe (strain 972 / ATCC 24843) (Fission yeast)).